The chain runs to 913 residues: Chitin synthase 1 (913 aa).

The disordered stretch occupies residues 1–135 (MAYRGGGPND…QQPGAQTGGL (135 aa)). A glycan (N-linked (GlcNAc...) asparagine) is linked at N25. Residues 41 to 56 (RDPHARGTSPYEHHLG) show a composition bias toward basic and acidic residues. An N-linked (GlcNAc...) asparagine glycan is attached at N539. 7 consecutive transmembrane segments (helical) span residues 566 to 586 (FFFH…WFSL), 625 to 645 (IINS…FVLA), 658 to 678 (IASF…SGYL), 712 to 732 (VILV…FMYL), 740 to 760 (SFPY…VYAF), 840 to 860 (TGLV…ITTD), and 881 to 901 (FLLY…LWFL).

This sequence belongs to the chitin synthase family. Class III subfamily.

It localises to the cell membrane. It catalyses the reaction [(1-&gt;4)-N-acetyl-beta-D-glucosaminyl](n) + UDP-N-acetyl-alpha-D-glucosamine = [(1-&gt;4)-N-acetyl-beta-D-glucosaminyl](n+1) + UDP + H(+). Functionally, polymerizes chitin, a structural polymer of the cell wall and septum, by transferring the sugar moiety of UDP-GlcNAc to the non-reducing end of the growing chitin polymer. Plays a role in cell wall integrity and is involved in tolerance to hyperosmotic conditions. Required to successfully penetrate the host plants and thus plays a key role in pathogenicity. This is Chitin synthase 1 from Verticillium dahliae (strain VdLs.17 / ATCC MYA-4575 / FGSC 10137) (Verticillium wilt).